The primary structure comprises 464 residues: Glutamate--tRNA ligase (464 aa).

Residues 9–19 carry the 'HIGH' region motif; sequence PSPTGYLHIGG. Residues 242–246 carry the 'KMSKS' region motif; the sequence is KISKR. Residue lysine 245 coordinates ATP.

It belongs to the class-I aminoacyl-tRNA synthetase family. Glutamate--tRNA ligase type 1 subfamily. In terms of assembly, monomer.

The protein resides in the cytoplasm. The catalysed reaction is tRNA(Glu) + L-glutamate + ATP = L-glutamyl-tRNA(Glu) + AMP + diphosphate. In terms of biological role, catalyzes the attachment of glutamate to tRNA(Glu) in a two-step reaction: glutamate is first activated by ATP to form Glu-AMP and then transferred to the acceptor end of tRNA(Glu). The chain is Glutamate--tRNA ligase from Neisseria meningitidis serogroup C / serotype 2a (strain ATCC 700532 / DSM 15464 / FAM18).